The chain runs to 307 residues: Nicotinamide/nicotinic acid mononucleotide adenylyltransferase 2 (307 aa).

S16 and F17 together coordinate NAD(+). Position 24 (H24) interacts with ATP. Positions 92, 95, 200, 202, 212, 213, and 232 each coordinate NAD(+). An ATP-binding site is contributed by 271 to 274; sequence TKSR.

Belongs to the eukaryotic NMN adenylyltransferase family. As to quaternary structure, monomer. It depends on Mg(2+) as a cofactor.

It is found in the golgi apparatus membrane. Its subcellular location is the cytoplasmic vesicle membrane. It localises to the cytoplasm. The protein resides in the cell projection. The protein localises to the axon. It catalyses the reaction beta-nicotinamide D-ribonucleotide + ATP + H(+) = diphosphate + NAD(+). The catalysed reaction is nicotinate beta-D-ribonucleotide + ATP + H(+) = deamido-NAD(+) + diphosphate. It functions in the pathway cofactor biosynthesis; NAD(+) biosynthesis; NAD(+) from nicotinamide D-ribonucleotide: step 1/1. The protein operates within cofactor biosynthesis; NAD(+) biosynthesis; deamido-NAD(+) from nicotinate D-ribonucleotide: step 1/1. Functionally, nicotinamide/nicotinate-nucleotide adenylyltransferase that acts as an axon maintenance factor. Axon survival factor required for the maintenance of healthy axons: acts by delaying Wallerian axon degeneration, an evolutionarily conserved process that drives the loss of damaged axons. Catalyzes the formation of NAD(+) from nicotinamide mononucleotide (NMN) and ATP. Can also use the deamidated form; nicotinic acid mononucleotide (NaMN) as substrate but with a lower efficiency. Also catalyzes the reverse reaction, i.e. the pyrophosphorolytic cleavage of NAD(+). For the pyrophosphorolytic activity prefers NAD(+), NADH and NaAD as substrates and degrades nicotinic acid adenine dinucleotide phosphate (NHD) less effectively. Also acts as an activator of ADP-ribosylation by supporting the catalytic activity of PARP16 and promoting mono-ADP-ribosylation of ribosomes by PARP16. May be involved in the maintenance of axonal integrity. The polypeptide is Nicotinamide/nicotinic acid mononucleotide adenylyltransferase 2 (nmnat2) (Xenopus tropicalis (Western clawed frog)).